The chain runs to 65 residues: Large ribosomal subunit protein bL28 (65 aa).

Positions M1 to K26 are disordered. The span at S11–L22 shows a compositional bias: polar residues.

It belongs to the bacterial ribosomal protein bL28 family.

This Mycoplasma mycoides subsp. mycoides SC (strain CCUG 32753 / NCTC 10114 / PG1) protein is Large ribosomal subunit protein bL28.